We begin with the raw amino-acid sequence, 363 residues long: Peptide chain release factor 1 (363 aa).

Q237 bears the N5-methylglutamine mark. Basic and acidic residues predominate over residues 284–296 (EDEKRRSAEESTR). Residues 284 to 306 (EDEKRRSAEESTRRSLVASGDRS) are disordered.

Belongs to the prokaryotic/mitochondrial release factor family. Post-translationally, methylated by PrmC. Methylation increases the termination efficiency of RF1.

The protein resides in the cytoplasm. In terms of biological role, peptide chain release factor 1 directs the termination of translation in response to the peptide chain termination codons UAG and UAA. In Shewanella putrefaciens (strain CN-32 / ATCC BAA-453), this protein is Peptide chain release factor 1.